Reading from the N-terminus, the 127-residue chain is MWKSILAIALGAALGALLRWFLGLKLNSLLSSIPPGTLLANLVGGYVIGAAIAYFAQAPGIAPEWRLLIITGFCGGLTTFSTFSAEVVSLLQEGRLGWAAGAIATHVSGSLLMTLLGLFSMNWMLGK.

4 consecutive transmembrane segments (helical) span residues 4 to 24 (SILA…FLGL), 36 to 56 (GTLL…AYFA), 68 to 88 (LIIT…AEVV), and 99 to 119 (AAGA…LGLF). Residues Gly-75 and Thr-78 each coordinate Na(+).

The protein belongs to the fluoride channel Fluc/FEX (TC 1.A.43) family.

The protein localises to the cell inner membrane. The enzyme catalyses fluoride(in) = fluoride(out). Its activity is regulated as follows. Na(+) is not transported, but it plays an essential structural role and its presence is essential for fluoride channel function. In terms of biological role, fluoride-specific ion channel. Important for reducing fluoride concentration in the cell, thus reducing its toxicity. The protein is Fluoride-specific ion channel FluC of Pseudomonas aeruginosa (strain UCBPP-PA14).